The following is a 278-amino-acid chain: MKI67 FHA domain-interacting nucleolar phosphoprotein-like (278 aa).

Positions 41-119 (GVIYIGHIPK…RLLKCEFVTP (79 aa)) constitute an RRM domain.

It is found in the nucleus. The protein resides in the nucleolus. This chain is MKI67 FHA domain-interacting nucleolar phosphoprotein-like (nifk), found in Xenopus laevis (African clawed frog).